Here is a 951-residue protein sequence, read N- to C-terminus: Valine--tRNA ligase (951 aa).

The 'HIGH' region signature appears at 42–52 (PNVTGSLHMGH). The 'KMSKS' region signature appears at 554 to 558 (KMSKS). An ATP-binding site is contributed by Lys557. Positions 880 to 944 (AGLINKEDEL…AEAKAKLIEQ (65 aa)) form a coiled coil.

The protein belongs to the class-I aminoacyl-tRNA synthetase family. ValS type 1 subfamily. Monomer.

The protein localises to the cytoplasm. It carries out the reaction tRNA(Val) + L-valine + ATP = L-valyl-tRNA(Val) + AMP + diphosphate. Its function is as follows. Catalyzes the attachment of valine to tRNA(Val). As ValRS can inadvertently accommodate and process structurally similar amino acids such as threonine, to avoid such errors, it has a 'posttransfer' editing activity that hydrolyzes mischarged Thr-tRNA(Val) in a tRNA-dependent manner. This Shigella flexneri protein is Valine--tRNA ligase.